The sequence spans 691 residues: Elongation factor G (691 aa).

The 276-residue stretch at 8 to 283 (KRVRNIGIAA…AVVAYLPAPD (276 aa)) folds into the tr-type G domain. GTP is bound by residues 17-24 (AHIDAGKT), 81-85 (DTPGH), and 135-138 (NKMD).

The protein belongs to the TRAFAC class translation factor GTPase superfamily. Classic translation factor GTPase family. EF-G/EF-2 subfamily.

Its subcellular location is the cytoplasm. Catalyzes the GTP-dependent ribosomal translocation step during translation elongation. During this step, the ribosome changes from the pre-translocational (PRE) to the post-translocational (POST) state as the newly formed A-site-bound peptidyl-tRNA and P-site-bound deacylated tRNA move to the P and E sites, respectively. Catalyzes the coordinated movement of the two tRNA molecules, the mRNA and conformational changes in the ribosome. The chain is Elongation factor G from Campylobacter lari (strain RM2100 / D67 / ATCC BAA-1060).